We begin with the raw amino-acid sequence, 124 residues long: Astakine (124 aa).

The N-terminal stretch at 1–21 (MAVSSAVRMLSVACLVVSAAG) is a signal peptide. Intrachain disulfides connect Cys-28-Cys-40, Cys-34-Cys-52, Cys-39-Cys-91, Cys-62-Cys-99, and Cys-93-Cys-106.

This sequence belongs to the AVIT (prokineticin) family.

The protein resides in the secreted. In terms of biological role, cytokine directly involved in hematopoiesis. In Penaeus monodon (Giant tiger prawn), this protein is Astakine.